A 710-amino-acid chain; its full sequence is Interferon-induced GTP-binding protein Mx2 (710 aa).

The segment at 1–51 (MSMSFRPLKYKRHTQTSTQHHPKQDIYFHQQPPGPPLGQTMSPPQWQVEES) is disordered. Polar residues predominate over residues 39–50 (QTMSPPQWQVEE). A Dynamin-type G domain is found at 112-383 (DLALPAIAVI…LIWHINKSLP (272 aa)). The tract at residues 122–129 (GDQSSGKS) is G1 motif. 122 to 129 (GDQSSGKS) contacts GTP. The interval 147-149 (ITR) is G2 motif. Residues 221 to 224 (DLPG) are G3 motif. GTP contacts are provided by residues 221-225 (DLPGI) and 290-293 (TKPD). A G4 motif region spans residues 290–293 (TKPD). The G5 motif stretch occupies residues 322 to 325 (KCRG). Positions 619 to 710 (IVEIGVHLNA…ALYEFPHFKG (92 aa)) constitute a GED domain.

This sequence belongs to the TRAFAC class dynamin-like GTPase superfamily. Dynamin/Fzo/YdjA family.

The protein resides in the cytoplasm. It localises to the nucleus. Functionally, interferon-induced dynamin-like GTPase with antiviral activity against vesicular stomatitis virus (VSV). This is Interferon-induced GTP-binding protein Mx2 (MX2) from Bos taurus (Bovine).